The chain runs to 184 residues: Acireductone dioxygenase (184 aa).

Residues histidine 87, histidine 89, glutamate 93, and histidine 137 each coordinate Fe(2+). Residues histidine 87, histidine 89, glutamate 93, and histidine 137 each contribute to the Ni(2+) site.

This sequence belongs to the acireductone dioxygenase (ARD) family. Fe(2+) is required as a cofactor. It depends on Ni(2+) as a cofactor.

It localises to the cytoplasm. The protein resides in the nucleus. The enzyme catalyses 1,2-dihydroxy-5-(methylsulfanyl)pent-1-en-3-one + O2 = 4-methylsulfanyl-2-oxobutanoate + formate + 2 H(+). It catalyses the reaction 1,2-dihydroxy-5-(methylsulfanyl)pent-1-en-3-one + O2 = 3-(methylsulfanyl)propanoate + CO + formate + 2 H(+). The protein operates within amino-acid biosynthesis; L-methionine biosynthesis via salvage pathway; L-methionine from S-methyl-5-thio-alpha-D-ribose 1-phosphate: step 5/6. In terms of biological role, catalyzes 2 different reactions between oxygen and the acireductone 1,2-dihydroxy-3-keto-5-methylthiopentene (DHK-MTPene) depending upon the metal bound in the active site. Fe-containing acireductone dioxygenase (Fe-ARD) produces formate and 2-keto-4-methylthiobutyrate (KMTB), the alpha-ketoacid precursor of methionine in the methionine recycle pathway. Ni-containing acireductone dioxygenase (Ni-ARD) produces methylthiopropionate, carbon monoxide and formate, and does not lie on the methionine recycle pathway. The protein is Acireductone dioxygenase of Ciona intestinalis (Transparent sea squirt).